We begin with the raw amino-acid sequence, 115 residues long: DNA-binding protein Ta0052 (115 aa).

The segment at 1–41 (MDDDEELERIRRQQLESMQRQAMQEQMREEQEKQREAERAR) is disordered. The segment covering 15-25 (LESMQRQAMQE) has biased composition (low complexity). Residues 26 to 41 (QMREEQEKQREAERAR) are compositionally biased toward basic and acidic residues.

Belongs to the PDCD5 family.

This is DNA-binding protein Ta0052 from Thermoplasma acidophilum (strain ATCC 25905 / DSM 1728 / JCM 9062 / NBRC 15155 / AMRC-C165).